We begin with the raw amino-acid sequence, 374 residues long: MKRQNVRTLSLIVCTFTYLLVGAAVFDALESDHEMREEEKLKAEEIRIKGKYNISSEDYRQLELVILQSEPHRAGVQWKFAGSFYFAITVITTIGYGHAAPGTDAGKAFCMFYAVLGIPLTLVMFQSLGERMNTFVRYLLKRIKKCCGMRNTDVSMENMVTVGFFSCMGTLCIGAAAFSQCEEWSFFHAYYYCFITLTTIGFGDYVALQTKGALQKKPLYVAFSFMYILVGLTVIGAFLNLVVLRFLTMNSEDERRDAEERASLAGNRNSMVIHIPEEPRPSRPRYKADVPDLQSVCSCTCYRSQDYGGRSVAPQNSFSAKLAPHYFHSISYKIEEISPSTLKNSLFPSPISSISPGLHSFTDHQRLMKRRKSV.

Residues 1–8 (MKRQNVRT) are Cytoplasmic-facing. The helical transmembrane segment at 9–29 (LSLIVCTFTYLLVGAAVFDAL) threads the bilayer. Topologically, residues 30–88 (ESDHEMREEEKLKAEEIRIKGKYNISSEDYRQLELVILQSEPHRAGVQWKFAGSFYFAI) are extracellular. An N-linked (GlcNAc...) asparagine glycan is attached at N53. The segment at residues 89–101 (TVITTIGYGHAAP) is an intramembrane region (pore-forming). Positions 93, 94, 95, and 96 each coordinate K(+). Residues 93–98 (TIGYGH) form a selectivity filter 1 region. Over 102–107 (GTDAGK) the chain is Extracellular. A helical membrane pass occupies residues 108–128 (AFCMFYAVLGIPLTLVMFQSL). The Cytoplasmic segment spans residues 129–158 (GERMNTFVRYLLKRIKKCCGMRNTDVSMEN). Residues 159–179 (MVTVGFFSCMGTLCIGAAAFS) form a helical membrane-spanning segment. Residues 180-194 (QCEEWSFFHAYYYCF) lie on the Extracellular side of the membrane. The pore-forming intramembrane region spans 195–207 (ITLTTIGFGDYVA). The K(+) site is built by T199, I200, G201, and F202. The tract at residues 199–204 (TIGFGD) is selectivity filter 2. The Extracellular segment spans residues 208-218 (LQTKGALQKKP). Residues 219–239 (LYVAFSFMYILVGLTVIGAFL) form a helical membrane-spanning segment. The Cytoplasmic portion of the chain corresponds to 240 to 374 (NLVVLRFLTM…QRLMKRRKSV (135 aa)). The tract at residues 243–248 (VLRFLT) is X-gate.

The protein belongs to the two pore domain potassium channel (TC 1.A.1.8) family. In terms of assembly, homodimer. Heterodimer with KCNK1. Heterodimer with KCNK3. In terms of tissue distribution, mainly found in the cerebellum. Also found in adrenal gland, kidney and lung.

The protein localises to the cell membrane. Its subcellular location is the mitochondrion inner membrane. The protein resides in the cell projection. It localises to the dendrite. It carries out the reaction K(+)(in) = K(+)(out). It catalyses the reaction Na(+)(in) = Na(+)(out). Its activity is regulated as follows. Inhibited by extracellular acidification adopting a nonconductive conformation at pH 6.0. Inhibited by phorbol 12-myristate 13-acetate (PMA). In terms of biological role, k(+) channel that conducts voltage-dependent outward rectifying currents upon membrane depolarization. Voltage sensing is coupled to K(+) electrochemical gradient in an 'ion flux gating' mode where outward but not inward ion flow opens the gate. Changes ion selectivity and becomes permeable to Na(+) ions in response to extracellular acidification. Protonation of the pH sensor His-98 stabilizes C-type inactivation conformation likely converting the channel from outward K(+)-conducting, to inward Na(+)-conducting to nonconductive state. Homo- and heterodimerizes to form functional channels with distinct regulatory and gating properties. Allows K(+) currents with fast-gating kinetics important for the repolarization and hyperpolarization phases of action potentials. In granule neurons, hyperpolarizes the resting membrane potential to limit intrinsic neuronal excitability, but once the action potential threshold is reached, supports high-frequency action potential firing and increased neuronal excitability. Homomeric and/or heteromeric KCNK3:KCNK9 channels operate in cerebellar granule cells, whereas heteromeric KCNK1:KCNK9 enables currents in hippocampal dentate gyrus granule neurons. Dispensable for central chemosensory respiration i.e. breathing controlled by brainstem CO2/pH, it rather conducts pH-sensitive currents and controls the firing rate of serotonergic raphe neurons involved in potentiation of the respiratory chemoreflex. In retinal ganglion cells, mediates outward currents that regulate action potentials in response to acidification of the synaptic cleft. Involved in transmission of image-forming and nonimage-forming visual information in the retina. In adrenal gland, contributes to the maintenance of a hyperpolarized resting membrane potential of aldosterone-producing cells at zona glomerulosa and limits aldosterone release as part of a regulatory mechanism that controls arterial blood pressure and electrolyte homeostasis. The chain is Potassium channel subfamily K member 9 from Homo sapiens (Human).